Reading from the N-terminus, the 39-residue chain is Cytochrome b559 subunit beta (39 aa).

Residues 14–30 form a helical membrane-spanning segment; that stretch reads WLAVHGLAVPTVFFLGS. Heme is bound at residue H18.

Belongs to the PsbE/PsbF family. In terms of assembly, heterodimer of an alpha subunit and a beta subunit. PSII is composed of 1 copy each of membrane proteins PsbA, PsbB, PsbC, PsbD, PsbE, PsbF, PsbH, PsbI, PsbJ, PsbK, PsbL, PsbM, PsbT, PsbX, PsbY, PsbZ, Psb30/Ycf12, at least 3 peripheral proteins of the oxygen-evolving complex and a large number of cofactors. It forms dimeric complexes. Requires heme b as cofactor.

The protein resides in the plastid membrane. In terms of biological role, this b-type cytochrome is tightly associated with the reaction center of photosystem II (PSII). PSII is a light-driven water:plastoquinone oxidoreductase that uses light energy to abstract electrons from H(2)O, generating O(2) and a proton gradient subsequently used for ATP formation. It consists of a core antenna complex that captures photons, and an electron transfer chain that converts photonic excitation into a charge separation. This Cuscuta europaea (European dodder) protein is Cytochrome b559 subunit beta.